The following is an 81-amino-acid chain: MQKLTILLLVAAVLMSTQALNQEQHQRAKINLLSKRKPPAERWWRWGGCMLWFGRCTKDSECCSNSCDRTYCELARFPSDW.

Residues 1–19 (MQKLTILLLVAAVLMSTQA) form the signal peptide. Positions 20-42 (LNQEQHQRAKINLLSKRKPPAER) are excised as a propeptide. 3 disulfide bridges follow: C49–C63, C56–C67, and C62–C72.

Belongs to the conotoxin O2 superfamily. Expressed by the venom duct.

Its subcellular location is the secreted. Gamma-conotoxins may act on voltage-gated non-specific cation pacemaker channels (HCN). The polypeptide is Gamma-conotoxin-like TeA53 (Conus textile (Cloth-of-gold cone)).